The primary structure comprises 323 residues: Sphingomyelinase D (323 aa).

The N-terminal stretch at Met1 to Gly20 is a signal peptide. His59 is a catalytic residue. Mg(2+) is bound by residues Glu79, Asp81, and Asp127. The SMD-tail signature appears at Ala308–Trp315.

The protein belongs to the sphingomyelinase D/phospholipase D family. Requires Mg(2+) as cofactor.

Its subcellular location is the secreted. The enzyme catalyses a sphingomyelin + H2O = an N-acylsphing-4-enine 1-phosphate + choline + H(+). Its function is as follows. Catalyzes the hydrolysis of sphingomyelin. Sphingomyelinases D are produced by some spider in their venoms, but also by arthropods such as ticks, or pathogenic bacteria and fungi. They might play a role in pathogenicity through different mechanisms, such as membrane destabilization and host cell penetration, but also pulmonary inflammation and cutaneous lesions. The sequence is that of Sphingomyelinase D from Trichophyton rubrum (strain ATCC MYA-4607 / CBS 118892) (Athlete's foot fungus).